A 577-amino-acid polypeptide reads, in one-letter code: Nuclear receptor subfamily 4 group A member 1 (577 aa).

The segment at residues 243-318 is a DNA-binding region (nuclear receptor); sequence EGRCAVCGDN…VGMVKEVVRT (76 aa). 2 NR C4-type zinc fingers span residues 246–266 and 282–311; these read CAVC…CEGC and CLAN…VVGM. The interval 247–333 is required for binding NBRE-containing DNA; the sequence is AVCGDNASCQ…RRGRLPSKPK (87 aa). The region spanning 339-574 is the NR LBD domain; sequence SPVDLINSLV…PIVDKIFMDT (236 aa). The interval 500 to 523 is may bind lipopolysaccharide; the sequence is PKKVEELQSQIINCLKEHIPSSMN. Residues 563 to 574 form an AF-2 region; that stretch reads PPPIVDKIFMDT.

It belongs to the nuclear hormone receptor family. NR4 subfamily. Zn(2+) is required as a cofactor.

The protein resides in the nucleus. It localises to the cytoplasm. Its subcellular location is the cytosol. Orphan nuclear receptor. Binds the NGFI-B response element (NBRE) 5'-AAAAGGTCA-3'. Its function is as follows. In the cytosol, may detect bacterial lipopolysaccharide (LPS) and NBRE-containing mitochondrial DNA released during pyroptosis, and play a role in non-canonical inflammasome activation. The sequence is that of Nuclear receptor subfamily 4 group A member 1 (nr4a1) from Xenopus laevis (African clawed frog).